The following is a 171-amino-acid chain: Large ribosomal subunit protein uL10 (171 aa).

Belongs to the universal ribosomal protein uL10 family. Part of the ribosomal stalk of the 50S ribosomal subunit. The N-terminus interacts with L11 and the large rRNA to form the base of the stalk. The C-terminus forms an elongated spine to which L12 dimers bind in a sequential fashion forming a multimeric L10(L12)X complex.

Functionally, forms part of the ribosomal stalk, playing a central role in the interaction of the ribosome with GTP-bound translation factors. The sequence is that of Large ribosomal subunit protein uL10 from Maricaulis maris (strain MCS10) (Caulobacter maris).